Here is a 438-residue protein sequence, read N- to C-terminus: Malic acid transport protein (438 aa).

A run of 10 helical transmembrane segments spans residues 37–57 (SWFA…SFPF), 65–85 (IGKI…SCML), 106–126 (LFIA…AIYA), 140–160 (ILYY…FFTI), 172–192 (SPAW…AGAV), 205–225 (VIFG…LFAV), 242–262 (PGMF…INIA), 288–308 (FMAI…MVSF), 321–341 (ACGW…TIEI), and 353–373 (FGHI…YLMV). The segment at 390–438 (AHPPPKPNTGVLNPTFPPEKAPASLEKVDTHVTSTGGESDPPSSEHESV) is disordered. Phosphoserine occurs at positions 413, 423, 428, 432, 433, and 437.

This sequence belongs to the tellurite-resistance/dicarboxylate transporter (TDT) family.

The protein localises to the membrane. Its function is as follows. Permease for malate and other C4 dicarboxylic acids. This chain is Malic acid transport protein (mae1), found in Schizosaccharomyces pombe (strain 972 / ATCC 24843) (Fission yeast).